We begin with the raw amino-acid sequence, 133 residues long: Vesicle transport protein GOT1A (133 aa).

Residues 1-9 (MISITEWQK) are Cytoplasmic-facing. A helical transmembrane segment spans residues 10–30 (IGVGITGFGVFFILFGILLYF). A topological domain (lumenal) is located at residue Asp-31. A helical transmembrane segment spans residues 32–52 (SVLLAFGNLLFLTGLSLIIGL). The Cytoplasmic portion of the chain corresponds to 53–68 (RRTFAFFFQRHKLKGT). The chain crosses the membrane as a helical span at residues 69 to 89 (SFFLGGVAIVLLRWPLLGMLL). Residues 90–92 (EAY) are Lumenal-facing. A helical membrane pass occupies residues 93–113 (GFISLFKGFFPVVFGFLGSAF). Topologically, residues 114–133 (NIPFLSTLFQKLQGSSSSMV) are cytoplasmic.

It belongs to the GOT1 family.

It localises to the golgi apparatus membrane. Functionally, may be involved in fusion of ER-derived transport vesicles with the Golgi complex. In Mus musculus (Mouse), this protein is Vesicle transport protein GOT1A.